The following is a 252-amino-acid chain: MLKMRIIPCLDVKDGRVVKGVNFVDLIDAGDPVEQAKLYDKAGADELTFLDITASHENRDTIYDVVRRTAEQCFMPLTVGGGVRVNDDIRKLLLAGADKVSINTAAVHRPEFVREAAEKFGSQCIVVAIDAKQTGPGKFEIFTHGGRNATGIDAVEWARRMTEYGAGEILLTSMDRDGTKQGFNIPLTRAVADAVTVPVIASGGVGNLDHLVEGIRDGHATAVLAASIFHFGTYTIAQAKAHMRAAGIPVRP.

Active-site residues include Asp-11 and Asp-130.

The protein belongs to the HisA/HisF family. As to quaternary structure, heterodimer of HisH and HisF.

Its subcellular location is the cytoplasm. The enzyme catalyses 5-[(5-phospho-1-deoxy-D-ribulos-1-ylimino)methylamino]-1-(5-phospho-beta-D-ribosyl)imidazole-4-carboxamide + L-glutamine = D-erythro-1-(imidazol-4-yl)glycerol 3-phosphate + 5-amino-1-(5-phospho-beta-D-ribosyl)imidazole-4-carboxamide + L-glutamate + H(+). Its pathway is amino-acid biosynthesis; L-histidine biosynthesis; L-histidine from 5-phospho-alpha-D-ribose 1-diphosphate: step 5/9. Functionally, IGPS catalyzes the conversion of PRFAR and glutamine to IGP, AICAR and glutamate. The HisF subunit catalyzes the cyclization activity that produces IGP and AICAR from PRFAR using the ammonia provided by the HisH subunit. This Paramagnetospirillum magneticum (strain ATCC 700264 / AMB-1) (Magnetospirillum magneticum) protein is Imidazole glycerol phosphate synthase subunit HisF.